The chain runs to 151 residues: Ribosome maturation factor RimP (151 aa).

The protein belongs to the RimP family.

It localises to the cytoplasm. In terms of biological role, required for maturation of 30S ribosomal subunits. This Endomicrobium trichonymphae protein is Ribosome maturation factor RimP.